The primary structure comprises 478 residues: Alpha,alpha-trehalose-phosphate synthase [UDP-forming] (478 aa).

Y89 and D143 together coordinate D-glucose 6-phosphate. UDP contacts are provided by R280 and K285. 2 residues coordinate UDP-alpha-D-glucose: R280 and K285. R318 is a binding site for D-glucose 6-phosphate. Residues I357 and 383 to 387 (LVSYE) contribute to the UDP site. UDP-alpha-D-glucose contacts are provided by residues I357 and 379 to 387 (DGMNLVSYE).

This sequence belongs to the glycosyltransferase 20 family.

It catalyses the reaction D-glucose 6-phosphate + UDP-alpha-D-glucose = alpha,alpha-trehalose 6-phosphate + UDP + H(+). It functions in the pathway carbohydrate biosynthesis. With respect to regulation, inhibited by validoxylamine A, a non-reactive trehalose analog. Synthase catalytic subunit of the trehalose synthase complex that catalyzes the production of trehalose from glucose-6-phosphate and UDP-alpha-D-glucose in a two step process. The polypeptide is Alpha,alpha-trehalose-phosphate synthase [UDP-forming] (Candida albicans (strain SC5314 / ATCC MYA-2876) (Yeast)).